A 68-amino-acid polypeptide reads, in one-letter code: Large ribosomal subunit protein uL29 (68 aa).

This sequence belongs to the universal ribosomal protein uL29 family.

In Methanobrevibacter smithii (strain ATCC 35061 / DSM 861 / OCM 144 / PS), this protein is Large ribosomal subunit protein uL29.